The following is a 355-amino-acid chain: Galectin-9 (355 aa).

Galectin domains lie at 17–148 (FTGM…ISFQ) and 227–355 (FFTS…HVQT). A beta-D-galactoside-binding positions include Asn48, His61, Arg65, Asn75, 82-88 (WGTEERK), His267, Arg271, Thr281, and 287-293 (WGSEERS).

It localises to the cytoplasm. The protein resides in the nucleus. It is found in the secreted. Functionally, binds galactosides. Has high affinity for the Forssman pentasaccharide. Ligand for HAVCR2/TIM3. Binding to HAVCR2 induces T-helper type 1 lymphocyte (Th1) death. Also stimulates bactericidal activity in infected macrophages by causing macrophage activation and IL1B secretion which restricts intracellular bacterial growth. Ligand for P4HB; the interaction retains P4HB at the cell surface of Th2 T helper cells, increasing disulfide reductase activity at the plasma membrane, altering the plasma membrane redox state and enhancing cell migration. Ligand for CD44; the interaction enhances binding of SMAD3 to the FOXP3 promoter, leading to up-regulation of FOXP3 expression and increased induced regulatory T (iTreg) cell stability and suppressive function. Promotes ability of mesenchymal stromal cells to suppress T-cell proliferation. Expands regulatory T-cells and induces cytotoxic T-cell apoptosis following virus infection. Activates ERK1/2 phosphorylation inducing cytokine (IL-6, IL-8, IL-12) and chemokine (CCL2) production in mast and dendritic cells. Inhibits degranulation and induces apoptosis of mast cells. Induces maturation and migration of dendritic cells. Inhibits natural killer (NK) cell function. Can transform NK cell phenotype from peripheral to decidual during pregnancy. Astrocyte derived galectin-9 enhances microglial TNF production. May play a role in thymocyte-epithelial interactions relevant to the biology of the thymus. May provide the molecular basis for urate flux across cell membranes, allowing urate that is formed during purine metabolism to efflux from cells and serving as an electrogenic transporter that plays an important role in renal and gastrointestinal urate excretion. Highly selective to the anion urate. This Bos taurus (Bovine) protein is Galectin-9 (LGALS9).